A 433-amino-acid polypeptide reads, in one-letter code: Legumain (433 aa).

A signal peptide spans 1–17; sequence MIWEFTVLLSLVLGTGA. Positions 18–25 are excised as a propeptide; sequence VPLEDPED. N-linked (GlcNAc...) asparagine glycosylation is present at asparagine 91. The active site involves histidine 148. An N-linked (GlcNAc...) asparagine glycan is attached at asparagine 167. Residue cysteine 189 is the Nucleophile of the active site. Asparagine 263 and asparagine 272 each carry an N-linked (GlcNAc...) asparagine glycan. Residues 324–433 constitute a propeptide that is removed on maturation; that stretch reads DLQESRRLVQ…SMNKVCHGYY (110 aa). 2 disulfides stabilise this stretch: cysteine 378–cysteine 412 and cysteine 390–cysteine 429.

This sequence belongs to the peptidase C13 family. As to quaternary structure, homodimer before autocatalytic removal of the propeptide. Monomer after autocatalytic processing. May interact with integrins. In terms of processing, activated by autocatalytic processing at pH 4. Detected in kidney (at protein level).

Its subcellular location is the lysosome. It catalyses the reaction Hydrolysis of proteins and small molecule substrates at -Asn-|-Xaa- bonds.. In terms of biological role, has a strict specificity for hydrolysis of asparaginyl bonds. Can also cleave aspartyl bonds slowly, especially under acidic conditions. Involved in the processing of proteins for MHC class II antigen presentation in the lysosomal/endosomal system. Also involved in MHC class I antigen presentation in cross-presenting dendritic cells by mediating cleavage and maturation of Perforin-2 (MPEG1), thereby promoting antigen translocation in the cytosol. Required for normal lysosomal protein degradation in renal proximal tubules. Required for normal degradation of internalized EGFR. Plays a role in the regulation of cell proliferation via its role in EGFR degradation. The protein is Legumain (LGMN) of Bos taurus (Bovine).